A 993-amino-acid polypeptide reads, in one-letter code: Ephrin type-A receptor 7 (993 aa).

The first 27 residues, 1-27 (MVLRSRLPPWIMLCSVWLLRFAHTGEA), serve as a signal peptide directing secretion. The Extracellular segment spans residues 28–550 (QAAKEVILLD…TAVSSEQNPV (523 aa)). Residues 32-210 (EVILLDSKAQ…YYKKCWSIIE (179 aa)) form the Eph LBD domain. Fibronectin type-III domains follow at residues 331 to 441 (PPSA…TGQA) and 442 to 537 (APSQ…TLEE). N-linked (GlcNAc...) asparagine glycans are attached at residues Asn343 and Asn410. The helical transmembrane segment at 551 to 571 (IIIAVVAVAGTIILVFMVFGF) threads the bilayer. At 572 to 993 (IIGRRHCGYS…LHLHGTGIQV (422 aa)) the chain is on the cytoplasmic side. Phosphotyrosine; by autocatalysis is present on residues Tyr603 and Tyr609. The 262-residue stretch at 628–889 (IKIERVIGAG…QIVGILDKMI (262 aa)) folds into the Protein kinase domain. Residues 634 to 642 (IGAGEFGEV) and Lys660 each bind ATP. The Proton acceptor role is filled by Asp753. 2 positions are modified to phosphotyrosine; by autocatalysis: Tyr786 and Tyr935. In terms of domain architecture, SAM spans 918 to 982 (TTFCSVGEWL…MSSIQTMRAQ (65 aa)). The short motif at 991-993 (IQV) is the PDZ-binding element.

It belongs to the protein kinase superfamily. Tyr protein kinase family. Ephrin receptor subfamily. In terms of assembly, heterotetramer upon binding of the ligand. The heterotetramer is composed of an ephrin dimer and a receptor dimer. Oligomerization is probably required to induce biological responses. Phosphorylated.

The protein resides in the cell membrane. It carries out the reaction L-tyrosyl-[protein] + ATP = O-phospho-L-tyrosyl-[protein] + ADP + H(+). In terms of biological role, receptor tyrosine kinase which binds promiscuously GPI-anchored ephrin-A family ligands residing on adjacent cells, leading to contact-dependent bidirectional signaling into neighboring cells. The signaling pathway downstream of the receptor is referred to as forward signaling while the signaling pathway downstream of the ephrin ligand is referred to as reverse signaling. Among GPI-anchored ephrin-A ligands, EFNA5 is a cognate/functional ligand for EPHA7 and their interaction regulates brain development modulating cell-cell adhesion and repulsion. Has a repellent activity on axons and is for instance involved in the guidance of corticothalamic axons and in the proper topographic mapping of retinal axons to the colliculus. May also regulate brain development through a caspase(CASP3)-dependent proapoptotic activity. Forward signaling may result in activation of components of the ERK signaling pathway including MAP2K1, MAP2K2, MAPK1 and MAPK3 which are phosphorylated upon activation of EPHA7. This is Ephrin type-A receptor 7 (EPHA7) from Gallus gallus (Chicken).